Reading from the N-terminus, the 430-residue chain is MPAGRAVSGRLENDMTTHAMTDAARAGAVTRRGVPRHLADFSLAERRRWVAELGEPSFRAVQISAHYFGRLTENPDEMTDLPASSRRELVGVLLPPLLRPVRELACDNGLTRKILWRLSDGAYVESVLMRYPPRHSRHAALGAEADADGGSRHGRVTLCVSSQAGCGMGCPFCATGQAGLVRNLSAAEIVAQVAVAARTVARGEMAGGPGRLSNVVFMGMGEPLANYRSVVDAVRRITEPPPEGLGISQRSVTVSTVGLVPAIERLATEGLAVTLAVSLHAPDDELRNVLVPINRRWPVRDVLGAAARYAEVTKRRVSVEYALIRDVNDQPWRADALAAQVKEFLGRLGHVNLIPLNPTPGSPWTASTPRAQAEFVRRLAAAGVTVTVRDTRGREVNGACGQLAATVEFRGRTVQETPAPSMAALDDAVR.

Residue glutamate 125 is the Proton acceptor of the active site. Residues 152 to 395 (RHGRVTLCVS…VTVRDTRGRE (244 aa)) enclose the Radical SAM core domain. The cysteines at positions 159 and 400 are disulfide-linked. [4Fe-4S] cluster contacts are provided by cysteine 166, cysteine 170, and cysteine 173. S-adenosyl-L-methionine-binding positions include 221–222 (GE), serine 255, 278–280 (SLH), and asparagine 357. The active-site S-methylcysteine intermediate is cysteine 400.

It belongs to the radical SAM superfamily. RlmN family. It depends on [4Fe-4S] cluster as a cofactor.

Its subcellular location is the cytoplasm. The catalysed reaction is adenosine(2503) in 23S rRNA + 2 reduced [2Fe-2S]-[ferredoxin] + 2 S-adenosyl-L-methionine = 2-methyladenosine(2503) in 23S rRNA + 5'-deoxyadenosine + L-methionine + 2 oxidized [2Fe-2S]-[ferredoxin] + S-adenosyl-L-homocysteine. The enzyme catalyses adenosine(37) in tRNA + 2 reduced [2Fe-2S]-[ferredoxin] + 2 S-adenosyl-L-methionine = 2-methyladenosine(37) in tRNA + 5'-deoxyadenosine + L-methionine + 2 oxidized [2Fe-2S]-[ferredoxin] + S-adenosyl-L-homocysteine. Specifically methylates position 2 of adenine 2503 in 23S rRNA and position 2 of adenine 37 in tRNAs. This Acidothermus cellulolyticus (strain ATCC 43068 / DSM 8971 / 11B) protein is Probable dual-specificity RNA methyltransferase RlmN.